A 130-amino-acid chain; its full sequence is MVRASVLNDCLKSMSNAEKQGKRQVMIRPSSKVIIKFLTVMQKHGYIAEFEYVDDHRSGKIVVELNGRLNNCGVISPRYDLGVKEIEGWTAKLLPSRQFGYIVLTTSAGIMDHEEARKKNVGGKVLGFFY.

This sequence belongs to the universal ribosomal protein uS8 family.

The chain is Small ribosomal subunit protein uS8y (RPS15AC) from Arabidopsis thaliana (Mouse-ear cress).